The following is a 259-amino-acid chain: Protein N-terminal and lysine N-methyltransferase efm7 (259 aa).

Residues W56, 83-85 (GAA), D105, W139, and A163 each bind S-adenosyl-L-methionine.

This sequence belongs to the class I-like SAM-binding methyltransferase superfamily. EFM7 family.

Its subcellular location is the cytoplasm. In terms of biological role, S-adenosyl-L-methionine-dependent protein methyltransferase that trimethylates the N-terminal glycine 'Gly-2' of elongation factor 1-alpha, before also catalyzing the mono- and dimethylation of 'Lys-3'. The polypeptide is Protein N-terminal and lysine N-methyltransferase efm7 (Aspergillus fumigatus (strain ATCC MYA-4609 / CBS 101355 / FGSC A1100 / Af293) (Neosartorya fumigata)).